Consider the following 356-residue polypeptide: Heat-inducible transcription repressor HrcA (356 aa).

This sequence belongs to the HrcA family.

Functionally, negative regulator of class I heat shock genes (grpE-dnaK-dnaJ and groELS operons). Prevents heat-shock induction of these operons. In Chlorobaculum tepidum (strain ATCC 49652 / DSM 12025 / NBRC 103806 / TLS) (Chlorobium tepidum), this protein is Heat-inducible transcription repressor HrcA.